Here is a 323-residue protein sequence, read N- to C-terminus: o-succinylbenzoate synthase (323 aa).

Catalysis depends on K134, which acts as the Proton donor. Mg(2+)-binding residues include D162, E191, and D214. K236 (proton acceptor) is an active-site residue.

Belongs to the mandelate racemase/muconate lactonizing enzyme family. MenC type 1 subfamily. It depends on a divalent metal cation as a cofactor.

The catalysed reaction is (1R,6R)-6-hydroxy-2-succinyl-cyclohexa-2,4-diene-1-carboxylate = 2-succinylbenzoate + H2O. It participates in quinol/quinone metabolism; 1,4-dihydroxy-2-naphthoate biosynthesis; 1,4-dihydroxy-2-naphthoate from chorismate: step 4/7. The protein operates within quinol/quinone metabolism; menaquinone biosynthesis. Its function is as follows. Converts 2-succinyl-6-hydroxy-2,4-cyclohexadiene-1-carboxylate (SHCHC) to 2-succinylbenzoate (OSB). The protein is o-succinylbenzoate synthase of Proteus mirabilis (strain HI4320).